Here is a 341-residue protein sequence, read N- to C-terminus: Anthranilate phosphoribosyltransferase (341 aa).

Residues Gly80, 83-84 (GD), Thr88, 90-93 (NIST), 108-116 (KHGNRAVSS), and Ser120 contribute to the 5-phospho-alpha-D-ribose 1-diphosphate site. Anthranilate is bound at residue Gly80. Residue Ser92 coordinates Mg(2+). Residue Asn111 participates in anthranilate binding. Arg166 is an anthranilate binding site. Mg(2+) contacts are provided by Asp225 and Glu226.

This sequence belongs to the anthranilate phosphoribosyltransferase family. In terms of assembly, homodimer. It depends on Mg(2+) as a cofactor.

It carries out the reaction N-(5-phospho-beta-D-ribosyl)anthranilate + diphosphate = 5-phospho-alpha-D-ribose 1-diphosphate + anthranilate. It participates in amino-acid biosynthesis; L-tryptophan biosynthesis; L-tryptophan from chorismate: step 2/5. In terms of biological role, catalyzes the transfer of the phosphoribosyl group of 5-phosphorylribose-1-pyrophosphate (PRPP) to anthranilate to yield N-(5'-phosphoribosyl)-anthranilate (PRA). The chain is Anthranilate phosphoribosyltransferase from Brevibacillus brevis (strain 47 / JCM 6285 / NBRC 100599).